Consider the following 260-residue polypeptide: Triosephosphate isomerase (260 aa).

11–13 (NWK) contributes to the substrate binding site. Catalysis depends on His103, which acts as the Electrophile. The active-site Proton acceptor is Glu175. Substrate-binding positions include Gly181, Ser220, and 241-242 (GG).

This sequence belongs to the triosephosphate isomerase family. Homodimer.

Its subcellular location is the cytoplasm. It carries out the reaction D-glyceraldehyde 3-phosphate = dihydroxyacetone phosphate. It participates in carbohydrate biosynthesis; gluconeogenesis. It functions in the pathway carbohydrate degradation; glycolysis; D-glyceraldehyde 3-phosphate from glycerone phosphate: step 1/1. In terms of biological role, involved in the gluconeogenesis. Catalyzes stereospecifically the conversion of dihydroxyacetone phosphate (DHAP) to D-glyceraldehyde-3-phosphate (G3P). This chain is Triosephosphate isomerase, found in Shewanella denitrificans (strain OS217 / ATCC BAA-1090 / DSM 15013).